The primary structure comprises 492 residues: Monocarboxylate transporter 3 (492 aa).

Topologically, residues Met1–Asp14 are cytoplasmic. A helical transmembrane segment spans residues Gly15 to Phe35. Residues Pro36–Ala58 are Extracellular-facing. A helical transmembrane segment spans residues Trp59–Val79. Residues Thr80–Arg85 lie on the Cytoplasmic side of the membrane. Residues Pro86 to Ser106 form a helical membrane-spanning segment. Over Arg107–Ala115 the chain is Extracellular. A helical membrane pass occupies residues Gly116–Leu136. The Cytoplasmic segment spans residues Tyr137–Asn146. A helical membrane pass occupies residues Gly147 to Leu167. Residues Gly168–Gly172 are Extracellular-facing. Residues Trp173–Val193 traverse the membrane as a helical segment. Residues Met194–Ala228 lie on the Cytoplasmic side of the membrane. The helical transmembrane segment at Phe229 to Leu249 threads the bilayer. At Leu250–Ala257 the chain is on the extracellular side. Residues Gly258–Ala278 traverse the membrane as a helical segment. Residues Arg279–Pro293 lie on the Cytoplasmic side of the membrane. The chain crosses the membrane as a helical span at residues His294–Ala314. Topologically, residues Arg315 to Ser318 are extracellular. A helical membrane pass occupies residues Tyr319–Leu339. Topologically, residues Gln340–Arg352 are cytoplasmic. A helical transmembrane segment spans residues Phe353–Pro373. The Extracellular portion of the chain corresponds to Ser374–Glu386. A helical membrane pass occupies residues Ile387–Thr407. The Cytoplasmic portion of the chain corresponds to Tyr408 to Ala492. Residues Ser419–Ala492 form a disordered region. Basolateral sorting signal regions lie at residues Gly426–Pro460 and Arg461–Ile482. The span at Glu476–Ala492 shows a compositional bias: basic and acidic residues.

Belongs to the major facilitator superfamily. Monocarboxylate porter (TC 2.A.1.13) family. In terms of tissue distribution, expressed exclusively in retinal pigment epithelium and choroid plexus epithelium.

The protein resides in the basolateral cell membrane. It carries out the reaction (S)-lactate(in) + H(+)(in) = (S)-lactate(out) + H(+)(out). In terms of biological role, probable retinal pigment epithelium (RPE)-specific proton-coupled L-lactate transporter. May facilitate transport of lactate and H(+) out of the retina and could therefore play an essential role in maintenance of metabolic and ionic homeostasis of the outer retina. This Mus musculus (Mouse) protein is Monocarboxylate transporter 3 (Slc16a8).